Reading from the N-terminus, the 146-residue chain is Acidic phospholipase A2 S13-69J (146 aa).

An N-terminal signal peptide occupies residues 1–19 (MYPAHLLVLLAVCVSLLGA). Positions 20–27 (ASIPPQPL) are excised as a propeptide. Cystine bridges form between Cys-38/Cys-98, Cys-54/Cys-145, Cys-56/Cys-72, Cys-71/Cys-126, Cys-78/Cys-119, Cys-87/Cys-112, and Cys-105/Cys-117. Residues Tyr-55, Gly-57, and Gly-59 each contribute to the Ca(2+) site. His-75 is an active-site residue. Asp-76 contacts Ca(2+). The active site involves Asp-120.

It belongs to the phospholipase A2 family. Group I subfamily. D49 sub-subfamily. It depends on Ca(2+) as a cofactor. In terms of tissue distribution, expressed by the venom gland.

It is found in the secreted. It carries out the reaction a 1,2-diacyl-sn-glycero-3-phosphocholine + H2O = a 1-acyl-sn-glycero-3-phosphocholine + a fatty acid + H(+). In terms of biological role, snake venom phospholipase A2 (PLA2) that inhibits collagen-induced platelet aggregation. PLA2 catalyzes the calcium-dependent hydrolysis of the 2-acyl groups in 3-sn-phosphoglycerides. The protein is Acidic phospholipase A2 S13-69J of Austrelaps superbus (Lowland copperhead snake).